The chain runs to 197 residues: Orotate phosphoribosyltransferase (197 aa).

Residues Arg-87, Lys-91, His-93, and Asp-112 to Ser-120 contribute to the 5-phospho-alpha-D-ribose 1-diphosphate site. Orotate-binding residues include Thr-116 and Arg-144.

The protein belongs to the purine/pyrimidine phosphoribosyltransferase family. PyrE subfamily. Homodimer. It depends on Mg(2+) as a cofactor.

It catalyses the reaction orotidine 5'-phosphate + diphosphate = orotate + 5-phospho-alpha-D-ribose 1-diphosphate. The protein operates within pyrimidine metabolism; UMP biosynthesis via de novo pathway; UMP from orotate: step 1/2. Catalyzes the transfer of a ribosyl phosphate group from 5-phosphoribose 1-diphosphate to orotate, leading to the formation of orotidine monophosphate (OMP). This chain is Orotate phosphoribosyltransferase, found in Sulfolobus acidocaldarius (strain ATCC 33909 / DSM 639 / JCM 8929 / NBRC 15157 / NCIMB 11770).